The following is a 219-amino-acid chain: Resolvase (219 aa).

Residues 15-159 enclose the Resolvase/invertase-type recombinase catalytic domain; it reads VARIYLRAST…EDRRERQRQG (145 aa). Serine 23 acts as the O-(5'-phospho-DNA)-serine intermediate in catalysis.

Belongs to the site-specific recombinase resolvase family.

Involved in plasmid partition. This chain is Resolvase (parA), found in Escherichia coli.